Reading from the N-terminus, the 389-residue chain is MGFRLAHLAACVARAAASSSRLRGPRPAASALVAPLLASPWEPSGGGQPHWLVPSRGHVGHSHHHHHGEEVGGEASERIFRLGLAADVVLTVGKAVTGYLSGSTAIAADAAHSLSDIVLSGVALLSYKAAKAPRDKEHPYGHGKFESLGALGISSMLLVTAGGIAWHAFDVLQGVMSSAPDIIGNVSHAHHSHGSSGHHHGIDLEHPILALSVTAFAISVKEGLYWITKRAGEKEGSGLMKANAWHHRSDAISSVVALLGVGGSILGVPYLDPLAGLVVSGMILKAGVHTGYESVLELVDAAVDPSLLQPIKETILQVDGVKGCHRLRGRKAGTSLYLDVHIEVYPFLSVSAAHDIGETVRHQIQKSHNQVAEVFIHIGSLQPLNQNAL.

The Cytoplasmic segment spans residues 1–81; sequence MGFRLAHLAA…GGEASERIFR (81 aa). A helical transmembrane segment spans residues 82–102; that stretch reads LGLAADVVLTVGKAVTGYLSG. Residues 103–104 lie on the Vacuolar side of the membrane; it reads ST. Residues 105–125 traverse the membrane as a helical segment; it reads AIAADAAHSLSDIVLSGVALL. Residues 126–148 lie on the Cytoplasmic side of the membrane; sequence SYKAAKAPRDKEHPYGHGKFESL. The helical transmembrane segment at 149-169 threads the bilayer; it reads GALGISSMLLVTAGGIAWHAF. Topologically, residues 170–206 are vacuolar; that stretch reads DVLQGVMSSAPDIIGNVSHAHHSHGSSGHHHGIDLEH. A helical transmembrane segment spans residues 207-227; it reads PILALSVTAFAISVKEGLYWI. Topologically, residues 228–250 are cytoplasmic; the sequence is TKRAGEKEGSGLMKANAWHHRSD. A helical transmembrane segment spans residues 251–271; the sequence is AISSVVALLGVGGSILGVPYL. Residues 272–275 lie on the Vacuolar side of the membrane; the sequence is DPLA. A helical membrane pass occupies residues 276–296; that stretch reads GLVVSGMILKAGVHTGYESVL. Over 297 to 389 the chain is Cytoplasmic; the sequence is ELVDAAVDPS…SLQPLNQNAL (93 aa).

The protein belongs to the cation diffusion facilitator (CDF) transporter (TC 2.A.4) family. SLC30A subfamily.

The protein resides in the vacuole membrane. Its function is as follows. Involved in sequestration of excess metal in the cytoplasm into vacuoles to maintain metal homeostasis. This Oryza sativa subsp. japonica (Rice) protein is Metal tolerance protein 2 (MTP2).